The chain runs to 239 residues: Small ribosomal subunit protein uS3 (239 aa).

The KH type-2 domain occupies 39–107 (VRQVLRKKMS…SVHINVIEVR (69 aa)). Residues 217–239 (KQDDISRGDRNADRSSRRSREVR) are disordered.

This sequence belongs to the universal ribosomal protein uS3 family. In terms of assembly, part of the 30S ribosomal subunit. Forms a tight complex with proteins S10 and S14.

Functionally, binds the lower part of the 30S subunit head. Binds mRNA in the 70S ribosome, positioning it for translation. This Xylella fastidiosa (strain 9a5c) protein is Small ribosomal subunit protein uS3.